The primary structure comprises 377 residues: Geranylgeranyl transferase type-1 subunit beta (377 aa).

PFTB repeat units lie at residues 144-186, 193-234, 245-284, and 291-333; these read KEAC…YMLN, MKKA…CLMG, LNRI…KLLK, and FEKN…SLME. Residues 219–221 and 263–266 each bind geranylgeranyl diphosphate; these read HGG and RPNK. Residues D269 and C271 each coordinate Zn(2+). A geranylgeranyl diphosphate-binding site is contributed by 272–275; that stretch reads YSFW. Residue H321 coordinates Zn(2+).

Belongs to the protein prenyltransferase subunit beta family. Heterodimer of FNTA and PGGT1B. PGGT1B mediates interaction with substrate peptides. Requires Zn(2+) as cofactor. Mg(2+) serves as cofactor.

It carries out the reaction geranylgeranyl diphosphate + L-cysteinyl-[protein] = S-geranylgeranyl-L-cysteinyl-[protein] + diphosphate. Functionally, catalyzes the transfer of a geranyl-geranyl moiety from geranyl-geranyl pyrophosphate to a cysteine at the fourth position from the C-terminus of proteins having the C-terminal sequence Cys-aliphatic-aliphatic-X. Known substrates include RAC1, RAC2, RAP1A and RAP1B. The chain is Geranylgeranyl transferase type-1 subunit beta (PGGT1B) from Homo sapiens (Human).